Consider the following 307-residue polypeptide: Ribonuclease Z (307 aa).

The Zn(2+) site is built by His61, His63, Asp65, His66, His138, Asp208, and His264. The active-site Proton acceptor is the Asp65.

Belongs to the RNase Z family. As to quaternary structure, homodimer. It depends on Zn(2+) as a cofactor.

It catalyses the reaction Endonucleolytic cleavage of RNA, removing extra 3' nucleotides from tRNA precursor, generating 3' termini of tRNAs. A 3'-hydroxy group is left at the tRNA terminus and a 5'-phosphoryl group is left at the trailer molecule.. In terms of biological role, zinc phosphodiesterase, which displays some tRNA 3'-processing endonuclease activity. Probably involved in tRNA maturation, by removing a 3'-trailer from precursor tRNA. The chain is Ribonuclease Z from Pyrococcus abyssi (strain GE5 / Orsay).